Reading from the N-terminus, the 239-residue chain is Putative glutamine amidotransferase-like protein YfeJ (239 aa).

One can recognise a Glutamine amidotransferase type-1 domain in the interval 1–200; sequence MRVHFVVHES…IQHSQQELAD (200 aa).

In Salmonella typhimurium (strain LT2 / SGSC1412 / ATCC 700720), this protein is Putative glutamine amidotransferase-like protein YfeJ (yfeJ).